The primary structure comprises 155 residues: Ribosomal RNA large subunit methyltransferase H (155 aa).

S-adenosyl-L-methionine contacts are provided by residues L72, G103, and 122 to 127 (LSTLTL).

This sequence belongs to the RNA methyltransferase RlmH family. In terms of assembly, homodimer.

It is found in the cytoplasm. It carries out the reaction pseudouridine(1915) in 23S rRNA + S-adenosyl-L-methionine = N(3)-methylpseudouridine(1915) in 23S rRNA + S-adenosyl-L-homocysteine + H(+). Functionally, specifically methylates the pseudouridine at position 1915 (m3Psi1915) in 23S rRNA. This is Ribosomal RNA large subunit methyltransferase H from Klebsiella pneumoniae (strain 342).